A 168-amino-acid chain; its full sequence is Crossover junction endodeoxyribonuclease RuvC (168 aa).

Active-site residues include D9, E70, and D145. Mg(2+)-binding residues include D9, E70, and D145.

The protein belongs to the RuvC family. Homodimer which binds Holliday junction (HJ) DNA. The HJ becomes 2-fold symmetrical on binding to RuvC with unstacked arms; it has a different conformation from HJ DNA in complex with RuvA. In the full resolvosome a probable DNA-RuvA(4)-RuvB(12)-RuvC(2) complex forms which resolves the HJ. It depends on Mg(2+) as a cofactor.

The protein resides in the cytoplasm. It carries out the reaction Endonucleolytic cleavage at a junction such as a reciprocal single-stranded crossover between two homologous DNA duplexes (Holliday junction).. In terms of biological role, the RuvA-RuvB-RuvC complex processes Holliday junction (HJ) DNA during genetic recombination and DNA repair. Endonuclease that resolves HJ intermediates. Cleaves cruciform DNA by making single-stranded nicks across the HJ at symmetrical positions within the homologous arms, yielding a 5'-phosphate and a 3'-hydroxyl group; requires a central core of homology in the junction. The consensus cleavage sequence is 5'-(A/T)TT(C/G)-3'. Cleavage occurs on the 3'-side of the TT dinucleotide at the point of strand exchange. HJ branch migration catalyzed by RuvA-RuvB allows RuvC to scan DNA until it finds its consensus sequence, where it cleaves and resolves the cruciform DNA. This is Crossover junction endodeoxyribonuclease RuvC from Chlamydia caviae (strain ATCC VR-813 / DSM 19441 / 03DC25 / GPIC) (Chlamydophila caviae).